Consider the following 86-residue polypeptide: UPF0297 protein SAHV_1604 (86 aa).

Belongs to the UPF0297 family.

This Staphylococcus aureus (strain Mu3 / ATCC 700698) protein is UPF0297 protein SAHV_1604.